Reading from the N-terminus, the 308-residue chain is Cis-prenyltransferase 4, chloroplastic (308 aa).

A chloroplast-targeting transit peptide spans 1–45 (MAFSLQLQQIFVSYTRFCSQPKSITNPLISLKLPSIHPLAFAQNA). Residue Asp84 is part of the active site.

Belongs to the UPP synthase family. It depends on Mg(2+) as a cofactor. As to expression, widely expressed.

The protein localises to the plastid. It is found in the chloroplast. Functionally, uses neryl diphosphate and geranyl diphosphate to catalyze the cis-prenyl chain elongation and produce polyprenyl diphosphate with a chain of 55 carbons. The sequence is that of Cis-prenyltransferase 4, chloroplastic from Solanum lycopersicum (Tomato).